The following is a 521-amino-acid chain: Exoglucanase 1 (521 aa).

A signal peptide spans M1 to A17. Residues Q18–G450 form a catalytic region. Residue N32 is glycosylated (N-linked (GlcNAc...) asparagine). E229 acts as the Nucleophile in catalysis. The active-site Proton donor is E234. N-linked (GlcNAc...) asparagine glycosylation is present at N287. Residues T447 to G486 are disordered. Positions G451–T485 are linker. The region spanning T485–V521 is the CBM1 domain. Intrachain disulfides connect C493/C510 and C504/C520.

This sequence belongs to the glycosyl hydrolase 7 (cellulase C) family.

It is found in the secreted. It catalyses the reaction Hydrolysis of (1-&gt;4)-beta-D-glucosidic linkages in cellulose and cellotetraose, releasing cellobiose from the non-reducing ends of the chains.. The chain is Exoglucanase 1 (cbh-1) from Neurospora crassa (strain ATCC 24698 / 74-OR23-1A / CBS 708.71 / DSM 1257 / FGSC 987).